Here is a 509-residue protein sequence, read N- to C-terminus: Scavenger receptor class B member 1 (509 aa).

Residues 1–11 (MGGSARARWVA) are Cytoplasmic-facing. Residues 12 to 32 (VGLGVVGLLCAVLGVVMILVM) traverse the membrane as a helical segment. At 33-440 (PSLIKQQVLK…YTQLVLMPQV (408 aa)) the chain is on the extracellular side. Residues asparagine 102, asparagine 108, asparagine 173, asparagine 212, asparagine 227, asparagine 255, asparagine 310, asparagine 330, and asparagine 383 are each glycosylated (N-linked (GlcNAc...) asparagine). Cysteine 251 and cysteine 384 are disulfide-bonded. Residues 441 to 461 (LQYVQYVLLGLGGLLLLVPVI) form a helical membrane-spanning segment. The Cytoplasmic segment spans residues 462–509 (YQLRSQEKCFLFWSGSKKGSQDKEAIQAYSESLMSPAAKGTVLQEAKL).

This sequence belongs to the CD36 family. Post-translationally, N-glycosylated. The six cysteines of the extracellular domain are all involved in intramolecular disulfide bonds.

It localises to the cell membrane. Its subcellular location is the membrane. The protein resides in the caveola. Its function is as follows. Receptor for different ligands such as phospholipids, cholesterol ester, lipoproteins, phosphatidylserine and apoptotic cells. Receptor for HDL, mediating selective uptake of cholesteryl ether and HDL-dependent cholesterol efflux. Also facilitates the flux of free and esterified cholesterol between the cell surface and apoB-containing lipoproteins and modified lipoproteins, although less efficiently than HDL. May be involved in the phagocytosis of apoptotic cells, via its phosphatidylserine binding activity. In Cricetulus griseus (Chinese hamster), this protein is Scavenger receptor class B member 1 (SCARB1).